The sequence spans 169 residues: Deoxyuridine 5'-triphosphate nucleotidohydrolase (169 aa).

Over residues 1–10 (MAENQINSPE) the composition is skewed to polar residues. The interval 1–25 (MAENQINSPEITEPSPKVQKLDHPE) is disordered. Residues 91-93 (RSG), 105-108 (GVID), Gly116, Arg159, and 164-165 (FG) contribute to the substrate site.

It belongs to the dUTPase family. In terms of assembly, homodimer. It depends on Mg(2+) as a cofactor. In terms of tissue distribution, vegetative and floral merismatic cells and provascular and vascular merismatic derivatives.

It catalyses the reaction dUTP + H2O = dUMP + diphosphate + H(+). Its pathway is pyrimidine metabolism; dUMP biosynthesis; dUMP from dCTP (dUTP route): step 2/2. Functionally, this enzyme is involved in nucleotide metabolism: it produces dUMP, the immediate precursor of thymidine nucleotides and it decreases the intracellular concentration of dUTP so that uracil cannot be incorporated into DNA. It may have as well a metabolic role in merismatic cells. This Solanum lycopersicum (Tomato) protein is Deoxyuridine 5'-triphosphate nucleotidohydrolase.